The chain runs to 344 residues: GTP 3',8-cyclase (344 aa).

Residues 19 to 245 enclose the Radical SAM core domain; sequence PFGRAVTYLR…DIPYRTGGPA (227 aa). Arg28 serves as a coordination point for GTP. Residues Cys35 and Cys39 each contribute to the [4Fe-4S] cluster site. Residue Tyr41 participates in S-adenosyl-L-methionine binding. Cys42 is a [4Fe-4S] cluster binding site. Arg77 serves as a coordination point for GTP. Position 81 (Gly81) interacts with S-adenosyl-L-methionine. Thr111 is a GTP binding site. Ser135 lines the S-adenosyl-L-methionine pocket. A GTP-binding site is contributed by Lys171. Met205 provides a ligand contact to S-adenosyl-L-methionine. [4Fe-4S] cluster is bound by residues Cys268 and Cys271. Residue 273-275 participates in GTP binding; that stretch reads RVR. Cys285 is a [4Fe-4S] cluster binding site.

Belongs to the radical SAM superfamily. MoaA family. As to quaternary structure, monomer and homodimer. Requires [4Fe-4S] cluster as cofactor.

It catalyses the reaction GTP + AH2 + S-adenosyl-L-methionine = (8S)-3',8-cyclo-7,8-dihydroguanosine 5'-triphosphate + 5'-deoxyadenosine + L-methionine + A + H(+). The protein operates within cofactor biosynthesis; molybdopterin biosynthesis. Functionally, catalyzes the cyclization of GTP to (8S)-3',8-cyclo-7,8-dihydroguanosine 5'-triphosphate. The polypeptide is GTP 3',8-cyclase (Brucella ovis (strain ATCC 25840 / 63/290 / NCTC 10512)).